Here is a 243-residue protein sequence, read N- to C-terminus: Adenylate dimethylallyltransferase (243 aa).

It carries out the reaction dimethylallyl diphosphate + AMP = N(6)-(dimethylallyl)adenosine 5'-phosphate + diphosphate. Its function is as follows. Transfers dimethylallyl groups to AMP as part of the biosynthesis of cytokinin phytohormones. In Agrobacterium fabrum (strain C58 / ATCC 33970) (Agrobacterium tumefaciens (strain C58)), this protein is Adenylate dimethylallyltransferase (tzs).